Here is a 201-residue protein sequence, read N- to C-terminus: Superoxide dismutase [Mn] (201 aa).

Mn(2+)-binding residues include His27, His81, Asp163, and His167.

This sequence belongs to the iron/manganese superoxide dismutase family. As to quaternary structure, homodimer. Requires Mn(2+) as cofactor.

The protein resides in the secreted. The catalysed reaction is 2 superoxide + 2 H(+) = H2O2 + O2. Its function is as follows. Destroys superoxide anion radicals which are normally produced within the cells and which are toxic to biological systems. In Streptococcus pyogenes serotype M18 (strain MGAS8232), this protein is Superoxide dismutase [Mn] (sodA).